The primary structure comprises 239 residues: 1-(5-phosphoribosyl)-5-[(5-phosphoribosylamino)methylideneamino] imidazole-4-carboxamide isomerase (239 aa).

The Proton acceptor role is filled by Asp-8. Asp-129 (proton donor) is an active-site residue.

Belongs to the HisA/HisF family.

It localises to the cytoplasm. The catalysed reaction is 1-(5-phospho-beta-D-ribosyl)-5-[(5-phospho-beta-D-ribosylamino)methylideneamino]imidazole-4-carboxamide = 5-[(5-phospho-1-deoxy-D-ribulos-1-ylimino)methylamino]-1-(5-phospho-beta-D-ribosyl)imidazole-4-carboxamide. Its pathway is amino-acid biosynthesis; L-histidine biosynthesis; L-histidine from 5-phospho-alpha-D-ribose 1-diphosphate: step 4/9. The polypeptide is 1-(5-phosphoribosyl)-5-[(5-phosphoribosylamino)methylideneamino] imidazole-4-carboxamide isomerase (Bacillus cereus (strain AH820)).